Reading from the N-terminus, the 540-residue chain is UDP-N-acetylmuramyl-tripeptide synthetase (540 aa).

Serine 33 provides a ligand contact to UDP-N-acetyl-alpha-D-muramoyl-L-alanyl-D-glutamate. 114–120 (GTEGKSS) contacts ATP. Residues 158-159 (TT), serine 185, and arginine 195 contribute to the UDP-N-acetyl-alpha-D-muramoyl-L-alanyl-D-glutamate site. Lysine 227 carries the post-translational modification N6-carboxylysine.

It belongs to the MurCDEF family. MurE subfamily. Carboxylation is probably crucial for Mg(2+) binding and, consequently, for the gamma-phosphate positioning of ATP.

The protein resides in the cytoplasm. It functions in the pathway cell wall biogenesis; peptidoglycan biosynthesis. In terms of biological role, catalyzes the addition of an amino acid to the nucleotide precursor UDP-N-acetylmuramoyl-L-alanyl-D-glutamate (UMAG) in the biosynthesis of bacterial cell-wall peptidoglycan. The protein is UDP-N-acetylmuramyl-tripeptide synthetase of Treponema pallidum (strain Nichols).